A 542-amino-acid polypeptide reads, in one-letter code: Delta 8-(E)-sphingolipid desaturase (542 aa).

The Cytochrome b5 heme-binding domain occupies 1–75; sequence MVVSREEVRE…FKRWSIGRVK (75 aa). H35 and H58 together coordinate heme. 2 consecutive transmembrane segments (helical) span residues 215-235 and 248-268; these read WYTL…FIAH and IDNI…LGWW. The Histidine box-1 signature appears at 235–239; sequence HDAGH. The short motif at 272–276 is the Histidine box-2 element; sequence HNVHH. 3 helical membrane-spanning segments follow: residues 329–346, 360–380, and 393–413; these read LYYP…RLSW, AAWF…WFFY, and FWFL…IVLS. The short motif at 455–459 is the Histidine box-3 element; sequence QAIHH.

This sequence belongs to the fatty acid desaturase type 1 family.

It localises to the membrane. It carries out the reaction an N-acylsphing-4-enine + 2 Fe(II)-[cytochrome b5] + O2 + 2 H(+) = a (4E,8E)-4-sphinga-4,8-dienine ceramide + 2 Fe(III)-[cytochrome b5] + 2 H2O. The protein operates within lipid metabolism; sphingolipid metabolism. Its function is as follows. Delta(8)-fatty-acid desaturase which introduces a double bond at the 8-position in the long-chain base (LCB) of ceramides. Required for the formation of the di-unsaturated sphingoid base (E,E)-sphinga-4,8-dienine during glucosylceramide (GluCer) biosynthesis. The chain is Delta 8-(E)-sphingolipid desaturase from Komagataella phaffii (strain GS115 / ATCC 20864) (Yeast).